Reading from the N-terminus, the 546-residue chain is Probable protein kinase UbiB (546 aa).

The 379-residue stretch at 124–502 (DFSVEPLASA…HVRQGQSRYL (379 aa)) folds into the Protein kinase domain. Residues 130–138 (LASASIAQV) and K153 each bind ATP. D288 acts as the Proton acceptor in catalysis. Transmembrane regions (helical) follow at residues 501–521 (YLFG…IHRP) and 522–542 (EWGM…LIGW).

Belongs to the ABC1 family. UbiB subfamily.

The protein localises to the cell inner membrane. Its pathway is cofactor biosynthesis; ubiquinone biosynthesis [regulation]. Functionally, is probably a protein kinase regulator of UbiI activity which is involved in aerobic coenzyme Q (ubiquinone) biosynthesis. The protein is Probable protein kinase UbiB of Klebsiella pneumoniae subsp. pneumoniae (strain ATCC 700721 / MGH 78578).